The sequence spans 424 residues: Tyrosine--tRNA ligase (424 aa).

L-tyrosine is bound at residue Tyr36. The 'HIGH' region signature appears at 41–50 (PTAPSLHAGH). L-tyrosine is bound by residues Tyr171 and Gln175. The 'KMSKS' region signature appears at 231 to 235 (KFGKS). Lys234 is a binding site for ATP. The 58-residue stretch at 356–413 (DGIVDLLVASGLSASKGAARRTIHEGGVSVNNIRVDNEEWVPQSSDFLHGRWLVLRRG) folds into the S4 RNA-binding domain.

It belongs to the class-I aminoacyl-tRNA synthetase family. TyrS type 1 subfamily. As to quaternary structure, homodimer.

It localises to the cytoplasm. The catalysed reaction is tRNA(Tyr) + L-tyrosine + ATP = L-tyrosyl-tRNA(Tyr) + AMP + diphosphate + H(+). Catalyzes the attachment of tyrosine to tRNA(Tyr) in a two-step reaction: tyrosine is first activated by ATP to form Tyr-AMP and then transferred to the acceptor end of tRNA(Tyr). The protein is Tyrosine--tRNA ligase of Mycobacterium bovis (strain ATCC BAA-935 / AF2122/97).